We begin with the raw amino-acid sequence, 503 residues long: MRYDVVIAGAGPTGLMLACELRLAGARTLVLERLAEPVDFSKALGVHARTVELLDMRGLGEGFQAEAPKLRGGNFASLGVPLDFSSFDTRHPYALFVPQVRTEELLTGRALELGAELRRGHAVTALEQDADGVTVSVTGPEGPYEVECAYLVGCDGGGSTVRKLLGIDFPGQDPHMFAVIADARFREELPHGEGMGPMRPYGVMRHDLRAWFAAFPLEPDVYRATVAFFDRPYADRRAPVTEEDVRAALTEVAGSDFGMHDVRWLSRLTDTSRQAERYRDGRVLLAGDACHIHLPAGGQGLNLGFQDAVNLGWKLGATIAGTAPPELLDTYEAERRPIAAGVLRNTRAQAVLIDPDPRYEGLRELMIELLHVPETNRYLAGLISALDVRYPMAGEHPLLGRRVPDLPLVTEDGTRQLSTYFHAARGVLLTLGCDQPLADEAAAWKDRVDLVAAEGVADPGSAVDGLTALLVRPDGYICWTAAPETGTDGLTDALRTWFGPPAM.

FAD-binding positions include Thr-13, 32-33 (ER), Leu-44, Gln-99, Val-123, Thr-160, Asp-288, and 301-302 (LN).

The protein belongs to the PheA/TfdB FAD monooxygenase family. As to quaternary structure, monomer. FAD is required as a cofactor.

The catalysed reaction is 5a,11a-dehydrotetracycline + NADPH + O2 + H(+) = 5a,11a-dehydrooxytetracycline + NADP(+) + H2O. It carries out the reaction anhydrotetracycline + NADPH + O2 + H(+) = 5a,11a-dehydrotetracycline + NADP(+) + H2O. It participates in antibiotic biosynthesis; oxytetracycline biosynthesis. Its function is as follows. Involved in the biosynthesis of the antibiotics oxytetracycline and tetracycline. OxyS starts by catalyzing the stereospecific hydroxylation of anhydrotetracycline at C(6) position to yield 5a,11a-dehydrotetracycline (12-dehydrotetracycline). If the released product is captured by OxyR, it is reduced to tetracycline. However, if the released product is recaptured by OxyS, it performs an additional hydroxylation at C(5), producing 5a,11a-dehydrooxytetracycline, which, following the action of OxyR becomes oxytetracycline. The protein is 12-dehydrotetracycline 5-monooxygenase/anhydrotetracycline 6-monooxygenase of Streptomyces rimosus subsp. rimosus (strain ATCC 10970 / DSM 40260 / JCM 4667 / NRRL 2234).